A 319-amino-acid chain; its full sequence is HTH-type transcriptional regulator YidZ (319 aa).

The 58-residue stretch at 8–65 folds into the HTH lysR-type domain; sequence LDLNLLLCLQLLMQERSVTKAAKRMNVTPSAVSKSLAKLRAWFDDPLFVNTPLGLAPT. The H-T-H motif DNA-binding region spans 25-44; it reads VTKAAKRMNVTPSAVSKSLA.

This sequence belongs to the LysR transcriptional regulatory family.

Involved in anaerobic NO protection. This Salmonella heidelberg (strain SL476) protein is HTH-type transcriptional regulator YidZ.